Reading from the N-terminus, the 124-residue chain is Ribonuclease pancreatic (124 aa).

Basic and acidic residues predominate over residues 1–13; sequence KETAAAKFERQHM. The segment at 1-25 is disordered; it reads KETAAAKFERQHMDSSTSSASSSNY. Substrate contacts are provided by Lys-7 and Arg-10. Catalysis depends on His-12, which acts as the Proton acceptor. 4 disulfides stabilise this stretch: Cys-26/Cys-84, Cys-40/Cys-95, Cys-58/Cys-110, and Cys-65/Cys-72. Substrate is bound by residues 41-45, Lys-66, and Arg-85; that span reads KPVNT. The active-site Proton donor is the His-119.

It belongs to the pancreatic ribonuclease family. As to quaternary structure, monomer. Interacts with and forms tight 1:1 complexes with RNH1. Dimerization of two such complexes may occur. Interaction with RNH1 inhibits this protein. In terms of tissue distribution, pancreas.

Its subcellular location is the secreted. The catalysed reaction is an [RNA] containing cytidine + H2O = an [RNA]-3'-cytidine-3'-phosphate + a 5'-hydroxy-ribonucleotide-3'-[RNA].. It carries out the reaction an [RNA] containing uridine + H2O = an [RNA]-3'-uridine-3'-phosphate + a 5'-hydroxy-ribonucleotide-3'-[RNA].. Its function is as follows. Endonuclease that catalyzes the cleavage of RNA on the 3' side of pyrimidine nucleotides. Acts on single-stranded and double-stranded RNA. In Tragelaphus oryx (Eland), this protein is Ribonuclease pancreatic (RNASE1).